Reading from the N-terminus, the 270-residue chain is Acyl-[acyl-carrier-protein]--UDP-N-acetylglucosamine O-acyltransferase (270 aa).

Substrate is bound by residues 69–72 (QDLK), His-121, His-140, and Gln-157.

The protein belongs to the transferase hexapeptide repeat family. LpxA subfamily. In terms of assembly, homotrimer.

The protein resides in the cytoplasm. The enzyme catalyses a (3R)-hydroxyacyl-[ACP] + UDP-N-acetyl-alpha-D-glucosamine = a UDP-3-O-[(3R)-3-hydroxyacyl]-N-acetyl-alpha-D-glucosamine + holo-[ACP]. Its pathway is glycolipid biosynthesis; lipid IV(A) biosynthesis; lipid IV(A) from (3R)-3-hydroxytetradecanoyl-[acyl-carrier-protein] and UDP-N-acetyl-alpha-D-glucosamine: step 1/6. Involved in the biosynthesis of lipid A, a phosphorylated glycolipid that anchors the lipopolysaccharide to the outer membrane of the cell. The protein is Acyl-[acyl-carrier-protein]--UDP-N-acetylglucosamine O-acyltransferase of Helicobacter pylori (strain ATCC 700392 / 26695) (Campylobacter pylori).